We begin with the raw amino-acid sequence, 291 residues long: Taste receptor type 2 member 16 (291 aa).

M1 is a topological domain (extracellular). Residues 2–22 (IPIQLTVFFMIIYVLESLTII) form a helical membrane-spanning segment. Topologically, residues 23–41 (VQSSLIVAVLGREWLQVRR) are cytoplasmic. A helical transmembrane segment spans residues 42 to 62 (LMPVDMILISLGISRFCLQWA). Residues 63-84 (SMLNNFCSYFNLNYVLCNLTIT) are Extracellular-facing. N-linked (GlcNAc...) asparagine glycosylation is present at N80. The chain crosses the membrane as a helical span at residues 85 to 105 (WEFFNILTFWLNSLLTVFYCI). The Cytoplasmic segment spans residues 106–125 (KVSSFTHHIFLWLRWRILRL). The helical transmembrane segment at 126–146 (FPWILLGSLMITCVTIIPSAI) threads the bilayer. The Extracellular portion of the chain corresponds to 147–182 (GNYIQIQLLTMEHLPRNSTVTDKLENFHQYQFQAHT). A glycan (N-linked (GlcNAc...) asparagine) is linked at N163. A helical membrane pass occupies residues 183-203 (VALVIPFILFLASTIFLMASL). Topologically, residues 204–228 (TKQIQHHSTGHCNPSMKARFTALRS) are cytoplasmic. A helical transmembrane segment spans residues 229–249 (LAVLFIVFTSYFLTILITIIG). Residues 250-257 (TLFDKRCW) lie on the Extracellular side of the membrane. The helical transmembrane segment at 258–278 (LWVWEAFVYAFILMHSTSLML) threads the bilayer. Topologically, residues 279-291 (SSPTLKRILKGKC) are cytoplasmic.

Belongs to the G-protein coupled receptor T2R family. As to quaternary structure, interacts with RTP3 and RTP4. As to expression, expressed in a subset of gustducin-positive taste receptor cells of the tongue. Expressed in circumvallate papillae and testis.

It localises to the cell membrane. Functionally, gustducin-coupled receptor implicated in the perception of bitter compounds in the oral cavity and the gastrointestinal tract. Signals through PLCB2 and the calcium-regulated cation channel TRPM5. The sequence is that of Taste receptor type 2 member 16 (TAS2R16) from Homo sapiens (Human).